We begin with the raw amino-acid sequence, 331 residues long: Ferredoxin--NADP reductase (331 aa).

The FAD site is built by Glu-34, Gln-42, Tyr-47, Val-87, Phe-121, Asp-285, and Thr-325.

This sequence belongs to the ferredoxin--NADP reductase type 2 family. As to quaternary structure, homodimer. It depends on FAD as a cofactor.

It carries out the reaction 2 reduced [2Fe-2S]-[ferredoxin] + NADP(+) + H(+) = 2 oxidized [2Fe-2S]-[ferredoxin] + NADPH. The chain is Ferredoxin--NADP reductase from Lactiplantibacillus plantarum (strain ATCC BAA-793 / NCIMB 8826 / WCFS1) (Lactobacillus plantarum).